The following is a 385-amino-acid chain: Mannitol-1-phosphate 5-dehydrogenase (385 aa).

3 to 14 is an NAD(+) binding site; it reads ALQFGAGNIGRG.

The protein belongs to the mannitol dehydrogenase family.

The enzyme catalyses D-mannitol 1-phosphate + NAD(+) = beta-D-fructose 6-phosphate + NADH + H(+). This chain is Mannitol-1-phosphate 5-dehydrogenase, found in Buchnera aphidicola subsp. Acyrthosiphon pisum (strain 5A).